The sequence spans 181 residues: Small ribosomal subunit protein cS23 (181 aa).

Positions 1–40 (MLPMSVHPATTPALASRPRVSLPRPSTPSSSSSLVHLKSR) are disordered. Over residues 14–36 (LASRPRVSLPRPSTPSSSSSLVH) the composition is skewed to low complexity.

This sequence belongs to the chloroplast-specific ribosomal protein cS23 family. Part of the 30S ribosomal subunit.

It is found in the plastid. It localises to the chloroplast. Its function is as follows. Component of the chloroplast ribosome (chloro-ribosome), a dedicated translation machinery responsible for the synthesis of chloroplast genome-encoded proteins, including proteins of the transcription and translation machinery and components of the photosynthetic apparatus. This is Small ribosomal subunit protein cS23 (PSRP3) from Hordeum vulgare (Barley).